We begin with the raw amino-acid sequence, 231 residues long: Large ribosomal subunit protein uL1 (231 aa).

Belongs to the universal ribosomal protein uL1 family. In terms of assembly, part of the 50S ribosomal subunit.

In terms of biological role, binds directly to 23S rRNA. The L1 stalk is quite mobile in the ribosome, and is involved in E site tRNA release. Its function is as follows. Protein L1 is also a translational repressor protein, it controls the translation of the L11 operon by binding to its mRNA. This chain is Large ribosomal subunit protein uL1, found in Clostridium kluyveri (strain NBRC 12016).